The chain runs to 36 residues: Lambda-hexatoxin-Hv1b (36 aa).

Disulfide bonds link cysteine 3/cysteine 17, cysteine 10/cysteine 22, cysteine 13/cysteine 14, and cysteine 16/cysteine 33.

It belongs to the neurotoxin 11 (kappa toxin) family. In terms of tissue distribution, expressed by the venom gland.

The protein resides in the secreted. This excitatory toxin inhibits insect calcium-activated potassium (KCa) channels (Slo-type). This Hadronyche versuta (Blue mountains funnel-web spider) protein is Lambda-hexatoxin-Hv1b.